Consider the following 349-residue polypeptide: Pseudouridylate synthase TRUB1 (349 aa).

At alanine 2 the chain carries N-acetylalanine. Serine 11 carries the post-translational modification Phosphoserine. Aspartate 121 functions as the Nucleophile in the catalytic mechanism.

This sequence belongs to the pseudouridine synthase TruB family. As to expression, highly expressed in heart, skeletal muscle and liver. Expressed at lower levels in lung, small intestine, kidney and spleen.

The protein resides in the nucleus. Its subcellular location is the cytoplasm. It is found in the cytosol. The enzyme catalyses a uridine in mRNA = a pseudouridine in mRNA. The catalysed reaction is a uridine in tRNA = a pseudouridine in tRNA. It catalyses the reaction uridine(55) in tRNA = pseudouridine(55) in tRNA. Pseudouridine synthase that catalyzes pseudouridylation of mRNAs and tRNAs. Mediates pseudouridylation of mRNAs with the consensus sequence 5'-GUUCNANNC-3', harboring a stem-loop structure. Constitutes the major pseudouridine synthase acting on mRNAs. Also catalyzes pseudouridylation of some tRNAs, including synthesis of pseudouridine(55) from uracil-55, in the psi GC loop of a subset of tRNAs. Promotes the processing of pri-let-7 microRNAs (pri-miRNAs) independently of its RNA pseudouridylate synthase activity. Acts by binding to the stem-loop structure on pri-let-7, preventing LIN28-binding (LIN28A and/or LIN28B), thereby enhancing the interaction between pri-let-7 and the microprocessor DGCR8, which mediates miRNA maturation. The protein is Pseudouridylate synthase TRUB1 of Homo sapiens (Human).